A 155-amino-acid polypeptide reads, in one-letter code: Cell division protein SepF (155 aa).

Residues 22–46 (RYVEEPEQRDERPALEKGRAPKEKQ) are compositionally biased toward basic and acidic residues. Residues 22–54 (RYVEEPEQRDERPALEKGRAPKEKQTAGMEQNQ) are disordered.

It belongs to the SepF family. Homodimer. Interacts with FtsZ.

The protein localises to the cytoplasm. Its function is as follows. Cell division protein that is part of the divisome complex and is recruited early to the Z-ring. Probably stimulates Z-ring formation, perhaps through the cross-linking of FtsZ protofilaments. Its function overlaps with FtsA. In Shouchella clausii (strain KSM-K16) (Alkalihalobacillus clausii), this protein is Cell division protein SepF.